A 166-amino-acid chain; its full sequence is MGTKLVVYVLLFDVFLSLVVGAYSGIAPPSIPPVPTYASAQLTASLITWTVGWPPITLWPQITLIPPFSILGANFPGLTIPSLTIPGVTLFSISFSWLAPIIYIANWIIWVFQTVASVLSYLLNIFTGSVGLLSSVPVLGPFLTAFVLIVNFVLVWELIKLIRGSE.

Its function is as follows. This protein may be involved in virus assembly. Essential for virus function. This is an uncharacterized protein from Sulfolobus spindle-shape virus 1 (SSV1).